The sequence spans 1851 residues: Chitin synthase (1851 aa).

The tract at residues 1–21 (MQYHQHQHQFPGPGPSHTSVY) is disordered. The Cytoplasmic portion of the chain corresponds to 1-108 (MQYHQHQHQF…KDTLYNGFLQ (108 aa)). A helical membrane pass occupies residues 109 to 129 (VLKMITFVALFVTTLGSSILA). At 130–168 (KLSLLVMAAGLGQAGHNISICPDKIPESPKNSVLISPKN) the chain is on the extracellular side. N-linked (GlcNAc...) asparagine glycosylation occurs at N146. The chain crosses the membrane as a helical span at residues 169-189 (AAKWAWALLLAICIPELLCFA). Over 190-208 (RSLHRSLFRKVRGPSFLQF) the chain is Cytoplasmic. Residues 209–229 (LLVFTVESVHAFGLGALVFAI) form a helical membrane-spanning segment. The Extracellular segment spans residues 230–234 (MPRGM). The helical transmembrane segment at 235-255 (VITMLQLGNSLCLIPSLLLPL) threads the bilayer. Topologically, residues 256-261 (SRSRSR) are cytoplasmic. The chain crosses the membrane as a helical span at residues 262–282 (WLPLLLLLDGSAILAQSSAAI). Over 283-291 (WRGSIPLER) the chain is Extracellular. Residues 292–312 (FGFVFLCTSLISIAWWQNFVH) form a helical membrane-spanning segment. Topologically, residues 313 to 337 (PHSFLPATRFFAHYAAKLRECRSKT) are cytoplasmic. Residues 338-358 (FVVLSPWKCLIFTFCMFQFVP) traverse the membrane as a helical segment. Residues 359–544 (PQIPFRELLQ…ELNQFTTAND (186 aa)) are Extracellular-facing. 2 N-linked (GlcNAc...) asparagine glycosylation sites follow: N385 and N435. A disordered region spans residues 432–522 (LFRNGTRRPP…DADEQEEEEE (91 aa)). Positions 442–454 (KKEEVKKNKMDSK) are enriched in basic and acidic residues. The span at 455–465 (KKTKKLKKKKG) shows a compositional bias: basic residues. Positions 466 to 478 (GNNNATSTNSSEK) are enriched in low complexity. N-linked (GlcNAc...) asparagine glycosylation is found at N469 and N474. Over residues 513–522 (DADEQEEEEE) the composition is skewed to acidic residues. The helical transmembrane segment at 545-565 (ALWLVFVQAGSVLLCQLCAKF) threads the bilayer. The Cytoplasmic portion of the chain corresponds to 566-573 (ACKVVMQR). The chain crosses the membrane as a helical span at residues 574-594 (VGLALPVVLSIPFGILFLAYS). Residues 595–631 (CRQKATNPCHLSEWMSKELFWQCPTRPFHWQRFFREQ) are Extracellular-facing. Residues 632–652 (PNLLWLCWWLSQCWITIHLWL) form a helical membrane-spanning segment. The Cytoplasmic portion of the chain corresponds to 653-1124 (PRQERLAKSE…VSIWYIAYQL (472 aa)). Residues 693 to 718 (SEDIDTEEEANEGGGEQEDGNSSTHT) are disordered. The segment covering 696 to 711 (IDTEEEANEGGGEQED) has biased composition (acidic residues). The helical transmembrane segment at 1125 to 1145 (VMLFSSVLGPGTIFLMIVGAI) threads the bilayer. Topologically, residues 1146–1154 (SISFNIDTR) are extracellular. A helical membrane pass occupies residues 1155–1175 (LALLIVTTPVLCFCVCCLTCG). Topologically, residues 1176-1179 (TETQ) are cytoplasmic. The helical transmembrane segment at 1180–1200 (LLLAQVIGALFAMLMTAVIVG) threads the bilayer. The Extracellular segment spans residues 1201-1209 (TSLQIQKDG). The chain crosses the membrane as a helical span at residues 1210-1230 (LLSPHSIFLFTVLGSWSFSAL). The Cytoplasmic portion of the chain corresponds to 1231 to 1235 (LHPLE). A helical transmembrane segment spans residues 1236–1256 (FGCLLPCGLYFLAIPCMYMLL). Residues 1257 to 1461 (PVYSLCNLNT…QRGLNELRNT (205 aa)) are Extracellular-facing. N1274 is a glycosylation site (N-linked (GlcNAc...) asparagine). Positions 1329-1383 (CADETVEVRKLDENFRKIERKLQSLERRTNGQGNNAEEEGKEEEETGKSEQERKE) form a coiled coil. The disordered stretch occupies residues 1350–1402 (LQSLERRTNGQGNNAEEEGKEEEETGKSEQERKEGREEGKEEEGKMSKRKKEE). The segment covering 1364 to 1373 (AEEEGKEEEE) has biased composition (acidic residues). Basic and acidic residues predominate over residues 1374–1402 (TGKSEQERKEGREEGKEEEGKMSKRKKEE). Residues 1462 to 1482 (CCSAFFMVNIVFIIVVLVLQL) traverse the membrane as a helical segment. Over 1483 to 1527 (QKDCLHIEWPLGPLVNQTRVQCGGGGGRDFEGEEWIMSRLQLEPM) the chain is Cytoplasmic. The chain crosses the membrane as a helical span at residues 1528-1548 (GFVFIVFFLIILFIQFLAMLF). Residues 1549–1851 (HRFGTFTHII…FLGTTNKRAK (303 aa)) lie on the Extracellular side of the membrane. The disordered stretch occupies residues 1626-1658 (GKRQQNAQIPPRCEKGGNERGEESPTSLPAPPV). The segment covering 1637–1648 (RCEKGGNERGEE) has biased composition (basic and acidic residues). N-linked (GlcNAc...) asparagine glycosylation occurs at N1660. The tract at residues 1765–1851 (HSIFPSSSES…FLGTTNKRAK (87 aa)) is disordered. Basic and acidic residues predominate over residues 1781-1822 (GGGRGRGREQERDKCLEGKKEKFRQRVEEGPARCHRLEELFG). Residues 1823–1834 (KSRKGGPQKRGK) are compositionally biased toward basic residues.

This sequence belongs to the chitin synthase family. Class IV subfamily. Post-translationally, may require proteolytic cleavage for activation.

The protein resides in the cell membrane. The catalysed reaction is [(1-&gt;4)-N-acetyl-beta-D-glucosaminyl](n) + UDP-N-acetyl-alpha-D-glucosamine = [(1-&gt;4)-N-acetyl-beta-D-glucosaminyl](n+1) + UDP + H(+). Its function is as follows. Required for the synthesis of chitin. The chain is Chitin synthase from Meloidogyne artiellia (British root-knot nematode).